The chain runs to 383 residues: Adaptive-response sensory kinase SasA (383 aa).

The Histidine kinase domain occupies 161–383; sequence MLAHDLRSPL…SFHFTLPVYR (223 aa). His-164 is subject to Phosphohistidine; by autocatalysis.

As to quaternary structure, homooligomerizes. Interacts with KaiC1. Interacts with KaiC1 and RpaA. Binds to the B-loop in the CI domain of KaiC; SasA and KaiB compete to bind to the CI domain.

The catalysed reaction is ATP + protein L-histidine = ADP + protein N-phospho-L-histidine.. Functionally, member of the two-component regulatory system SasA/RpaA involved in genome-wide circadian gene expression. One of several clock output pathways. Participates in the Kai clock protein complex, the main circadian regulator in cyanobacteria, via its interaction with KaiC. KaiC enhances the autophosphorylation activity of SasA, which then transfers its phosphate group to RpaA to activate it. In addition to its output function, recruits fold-shifted KaiB (KaiB(fs)) to KaiC to cooperatively form the KaiB(6):KaiC(6) complex (independent of SasA kinase activity). Required for robustness of the circadian rhythm of gene expression and is involved in clock output, also required for adaptation to light/dark cycles. In terms of biological role, plays an important role in glucose metabolism, important for expression of genes involved in glycolysis, gluconeogenesis, the oxidative pentose phosphate pathway, and glycogen metabolism. Required for heterotrophic growth. Overexpression from the psbAII promoter leads to altered levels of genes involved in carbon metabolism, increased levels of transcripts for clock oscillator genes in the light and the dark, complete loss of glycogen accumulation, decreased levels of metabolites of sugar catabolism and increased levels of amino acids in the light and increased levels of SigE protein. This Synechocystis sp. (strain ATCC 27184 / PCC 6803 / Kazusa) protein is Adaptive-response sensory kinase SasA.